A 78-amino-acid polypeptide reads, in one-letter code: Myrmicitoxin-Ta2a (78 aa).

A signal peptide spans 1–26 (MKLSFLSLALAIIFVTVLIYAPQAEA). The propeptide occupies 27–56 (KALADAVADADADADAAADAVADALADADA). Lys77 carries the post-translational modification Lysine amide.

It belongs to the formicidae venom precursor-01 superfamily. Expressed by the venom gland.

It is found in the secreted. In terms of biological role, peptide with toxicity towards insects that may also act as antimicrobial peptide. Causes calcium influx in F11 cells (EC(50)=5.8 nM), possibly by modulating sodium channels (Nav). In vivo, is lethal to insects, but does not show toxicity to vertebrates. Intraplantar injection into mice does not induce spontaneous nocifensive behaviors up to a dose of 200 pmol. The protein is Myrmicitoxin-Ta2a of Tetramorium africanum (Fierce ant).